Reading from the N-terminus, the 657-residue chain is Acetyl-coenzyme A synthetase (657 aa).

Residues 192 to 195 (RRGK) and Thr-311 contribute to the CoA site. ATP-binding positions include 387 to 389 (GEP), 411 to 416 (DTWWQT), Asp-504, Arg-519, and Arg-530. 2 residues coordinate Mg(2+): His-543 and Val-546. Arg-592 contacts CoA. The residue at position 617 (Lys-617) is an N6-acetyllysine.

The protein belongs to the ATP-dependent AMP-binding enzyme family. The cofactor is Mg(2+). Post-translationally, acetylated. Deacetylation by the SIR2-homolog deacetylase activates the enzyme.

It catalyses the reaction acetate + ATP + CoA = acetyl-CoA + AMP + diphosphate. Its function is as follows. Catalyzes the conversion of acetate into acetyl-CoA (AcCoA), an essential intermediate at the junction of anabolic and catabolic pathways. AcsA undergoes a two-step reaction. In the first half reaction, AcsA combines acetate with ATP to form acetyl-adenylate (AcAMP) intermediate. In the second half reaction, it can then transfer the acetyl group from AcAMP to the sulfhydryl group of CoA, forming the product AcCoA. The protein is Acetyl-coenzyme A synthetase of Campylobacter jejuni subsp. jejuni serotype O:6 (strain 81116 / NCTC 11828).